We begin with the raw amino-acid sequence, 340 residues long: Dihydroorotate dehydrogenase (quinone) (340 aa).

FMN-binding positions include 62–66 (AGLDK) and T86. K66 is a substrate binding site. 111–115 (NRMGF) is a substrate binding site. FMN contacts are provided by N139 and N172. Residue N172 coordinates substrate. The active-site Nucleophile is the S175. Residue N177 participates in substrate binding. FMN-binding residues include K217 and T245. 246–247 (NT) contributes to the substrate binding site. FMN contacts are provided by residues G268, G297, and 318-319 (YS).

This sequence belongs to the dihydroorotate dehydrogenase family. Type 2 subfamily. As to quaternary structure, monomer. FMN is required as a cofactor.

Its subcellular location is the cell membrane. The catalysed reaction is (S)-dihydroorotate + a quinone = orotate + a quinol. It functions in the pathway pyrimidine metabolism; UMP biosynthesis via de novo pathway; orotate from (S)-dihydroorotate (quinone route): step 1/1. Catalyzes the conversion of dihydroorotate to orotate with quinone as electron acceptor. This is Dihydroorotate dehydrogenase (quinone) from Alkalilimnicola ehrlichii (strain ATCC BAA-1101 / DSM 17681 / MLHE-1).